The chain runs to 365 residues: MSHNTFGHLFRVTTWGESHGPALGCVVDGCPPGLRFKLEDLQVWLDKRKPGQSRFVTQRREDDLVKVLSGVMLDADGETMTSTGTPISMLIENTDQRSKDYGEIARQYRPGHADFTYDLKYGIRDYRGGGRSSARETAARVAAGGIARLVVPGVTVRGALVQIGKHKIDRRNWDWDQVGQNPFFSPDAAIVPVWEEYLDGIRKAGSSIGAVVEVVAEGVPAGLGAPIYAKLDQDIASLLMSINAVKGVEIGNGFAAAETSGEDNADEMRMGNDGTPIFLSNNAGGILGGISTGQPVVARFAVKPTSSILTERQSIDADGKNVDVRTKGRHDPCVGIRAVPIGEAMVACAIADHYLRDRGQTGRLK.

NADP(+) is bound by residues R48 and R54. FMN contacts are provided by residues 131–133, 243–244, G288, 303–307, and R329; these read RSS, NA, and KPTSS.

This sequence belongs to the chorismate synthase family. Homotetramer. FMNH2 serves as cofactor.

It catalyses the reaction 5-O-(1-carboxyvinyl)-3-phosphoshikimate = chorismate + phosphate. Its pathway is metabolic intermediate biosynthesis; chorismate biosynthesis; chorismate from D-erythrose 4-phosphate and phosphoenolpyruvate: step 7/7. Its function is as follows. Catalyzes the anti-1,4-elimination of the C-3 phosphate and the C-6 proR hydrogen from 5-enolpyruvylshikimate-3-phosphate (EPSP) to yield chorismate, which is the branch point compound that serves as the starting substrate for the three terminal pathways of aromatic amino acid biosynthesis. This reaction introduces a second double bond into the aromatic ring system. This is Chorismate synthase from Rhizobium etli (strain CIAT 652).